Reading from the N-terminus, the 133-residue chain is Inhibitor of g-type lysozyme (133 aa).

An N-terminal signal peptide occupies residues 1–22 (MKIKSIRKAVLLLALLTSTSFA).

It is found in the periplasm. Its function is as follows. Inhibits activity of g-type lysozyme, which confers increased lysozyme tolerance to the bacterium. The polypeptide is Inhibitor of g-type lysozyme (pliG) (Escherichia coli (strain K12)).